The primary structure comprises 549 residues: Formate--tetrahydrofolate ligase (549 aa).

An ATP-binding site is contributed by 60 to 67 (TPYGEGKT).

The protein belongs to the formate--tetrahydrofolate ligase family.

It carries out the reaction (6S)-5,6,7,8-tetrahydrofolate + formate + ATP = (6R)-10-formyltetrahydrofolate + ADP + phosphate. It participates in one-carbon metabolism; tetrahydrofolate interconversion. This Campylobacter concisus (strain 13826) protein is Formate--tetrahydrofolate ligase.